A 45-amino-acid polypeptide reads, in one-letter code: Large ribosomal subunit protein bL34 (45 aa).

The segment at 1-45 is disordered; the sequence is MTKRTFGGTSRKRKRVSGFRVRMRTHTGRSVIRSRRKKGRSRIAV. The segment covering 10-45 has biased composition (basic residues); it reads SRKRKRVSGFRVRMRTHTGRSVIRSRRKKGRSRIAV.

Belongs to the bacterial ribosomal protein bL34 family.

This is Large ribosomal subunit protein bL34 from Prochlorococcus marinus (strain SARG / CCMP1375 / SS120).